The chain runs to 226 residues: DNA mismatch repair protein MutH (226 aa).

It belongs to the MutH family.

It is found in the cytoplasm. Sequence-specific endonuclease that cleaves unmethylated GATC sequences. It is involved in DNA mismatch repair. The polypeptide is DNA mismatch repair protein MutH (Haemophilus ducreyi (strain 35000HP / ATCC 700724)).